A 195-amino-acid polypeptide reads, in one-letter code: Peptidyl-tRNA hydrolase (195 aa).

Tyr17 lines the tRNA pocket. The active-site Proton acceptor is the His22. TRNA is bound by residues Phe68, Asn70, and Asn116.

Belongs to the PTH family. In terms of assembly, monomer.

Its subcellular location is the cytoplasm. The enzyme catalyses an N-acyl-L-alpha-aminoacyl-tRNA + H2O = an N-acyl-L-amino acid + a tRNA + H(+). Its function is as follows. Hydrolyzes ribosome-free peptidyl-tRNAs (with 1 or more amino acids incorporated), which drop off the ribosome during protein synthesis, or as a result of ribosome stalling. In terms of biological role, catalyzes the release of premature peptidyl moieties from peptidyl-tRNA molecules trapped in stalled 50S ribosomal subunits, and thus maintains levels of free tRNAs and 50S ribosomes. The sequence is that of Peptidyl-tRNA hydrolase from Pectobacterium carotovorum subsp. carotovorum (strain PC1).